A 330-amino-acid chain; its full sequence is D-cysteine desulfhydrase (330 aa).

Position 52 is an N6-(pyridoxal phosphate)lysine (Lys-52).

It belongs to the ACC deaminase/D-cysteine desulfhydrase family. As to quaternary structure, homodimer. The cofactor is pyridoxal 5'-phosphate.

The enzyme catalyses D-cysteine + H2O = hydrogen sulfide + pyruvate + NH4(+) + H(+). Catalyzes the alpha,beta-elimination reaction of D-cysteine and of several D-cysteine derivatives. It could be a defense mechanism against D-cysteine. In Yersinia pseudotuberculosis serotype O:1b (strain IP 31758), this protein is D-cysteine desulfhydrase.